A 132-amino-acid chain; its full sequence is Replication enhancer protein (132 aa).

The protein belongs to the geminiviridae replication enhancer protein family. Homooligomer. Interacts with the replication-associated protein (REP). Interacts with host proliferating cell nuclear antigen (PCNA). Interacts with host retinoblastoma-related protein 1 (RBR1), and may thereby deregulate the host cell cycle. Oligomerization and interaction with PCNA are necessary for optimal replication enhancement.

Its function is as follows. Increases viral DNA accumulation. Enhances infectivity and symptom expression. In Macroptilium lathyroides (Lima bean), this protein is Replication enhancer protein.